The following is a 61-amino-acid chain: Large ribosomal subunit protein eL24 (61 aa).

Zn(2+) contacts are provided by cysteine 7, cysteine 10, cysteine 33, and cysteine 37. The segment at 7–37 (CSFCGHEIPPGTGLMYVRNDGTMLWFCSSKC) adopts a C4-type zinc-finger fold.

This sequence belongs to the eukaryotic ribosomal protein eL24 family. Part of the 50S ribosomal subunit. Forms a cluster with proteins L3 and L14. Zn(2+) is required as a cofactor.

Its function is as follows. Binds to the 23S rRNA. The protein is Large ribosomal subunit protein eL24 of Saccharolobus islandicus (strain M.16.27) (Sulfolobus islandicus).